The chain runs to 212 residues: ATP-dependent Clp protease proteolytic subunit (212 aa).

S107 (nucleophile) is an active-site residue. The active site involves H132.

This sequence belongs to the peptidase S14 family. As to quaternary structure, fourteen ClpP subunits assemble into 2 heptameric rings which stack back to back to give a disk-like structure with a central cavity, resembling the structure of eukaryotic proteasomes.

The protein resides in the cytoplasm. It carries out the reaction Hydrolysis of proteins to small peptides in the presence of ATP and magnesium. alpha-casein is the usual test substrate. In the absence of ATP, only oligopeptides shorter than five residues are hydrolyzed (such as succinyl-Leu-Tyr-|-NHMec, and Leu-Tyr-Leu-|-Tyr-Trp, in which cleavage of the -Tyr-|-Leu- and -Tyr-|-Trp bonds also occurs).. Cleaves peptides in various proteins in a process that requires ATP hydrolysis. Has a chymotrypsin-like activity. Plays a major role in the degradation of misfolded proteins. In Pseudoalteromonas atlantica (strain T6c / ATCC BAA-1087), this protein is ATP-dependent Clp protease proteolytic subunit.